The primary structure comprises 99 residues: Protein NCBP2AS2 (99 aa).

The interval 76 to 99 (ELRRGLRGRSGPPPGSQRGPGANI) is disordered.

This Homo sapiens (Human) protein is Protein NCBP2AS2.